Reading from the N-terminus, the 263-residue chain is 1-(5-phosphoribosyl)-5-[(5-phosphoribosylamino)methylideneamino] imidazole-4-carboxamide isomerase (263 aa).

The protein belongs to the HisA/HisF family.

Its subcellular location is the cytoplasm. The enzyme catalyses 1-(5-phospho-beta-D-ribosyl)-5-[(5-phospho-beta-D-ribosylamino)methylideneamino]imidazole-4-carboxamide = 5-[(5-phospho-1-deoxy-D-ribulos-1-ylimino)methylamino]-1-(5-phospho-beta-D-ribosyl)imidazole-4-carboxamide. It functions in the pathway amino-acid biosynthesis; L-histidine biosynthesis; L-histidine from 5-phospho-alpha-D-ribose 1-diphosphate: step 4/9. The polypeptide is 1-(5-phosphoribosyl)-5-[(5-phosphoribosylamino)methylideneamino] imidazole-4-carboxamide isomerase (HIS6) (Eremothecium gossypii (strain ATCC 10895 / CBS 109.51 / FGSC 9923 / NRRL Y-1056) (Yeast)).